Here is a 2429-residue protein sequence, read N- to C-terminus: Reducing polyketide synthase ppsB (2429 aa).

Residues 4–442 (DERVAIIGTG…GTNAHAILES (439 aa)) enclose the Ketosynthase family 3 (KS3) domain. Active-site for beta-ketoacyl synthase activity residues include Cys-177, His-317, and His-362. Positions 558 to 873 (VFTGQGAQWP…PYIGLAHRGE (316 aa)) are malonyl-CoA:ACP transacylase (MAT) domain. Ser-652 acts as the For acyl/malonyl transferase activity in catalysis. The tract at residues 945-1075 (HPLLGVLSSE…GRVILALGEA (131 aa)) is N-terminal hotdog fold. Positions 945 to 1227 (HPLLGVLSSE…QLEGIHLTLS (283 aa)) are product template (PT) domain. The PKS/mFAS DH domain maps to 945–1233 (HPLLGVLSSE…LTLSKPKNSS (289 aa)). Positions 1090–1233 (SYPMNVDKFY…LTLSKPKNSS (144 aa)) are C-terminal hotdog fold. The interval 1409–2158 (LEVGAGTGSA…ISDLYDQLTS (750 aa)) is methyltransferase (CMeT) domain. Positions 2350–2425 (EIILQLFKEK…SMVDEVVKRR (76 aa)) constitute a Carrier domain. Ser-2385 is subject to O-(pantetheine 4'-phosphoryl)serine.

The protein operates within secondary metabolite biosynthesis. Reducing polyketide synthase; part of the gene cluster that mediates the biosynthesis of 2,4'-dihydroxy-3'-methoxypropiophenone. The first step of the pathway is the conversion of acetate into acetyl-CoA by the acyl-CoA ligase ppsA. Acetyl-CoA is then used as a starter unit by the polyketide synthase ppsB and condensed with 4 malonyl-CoA unit to produce the pentaketide backbone. During polyketide extension, the polykedite chain is probably reduced and dehydrated by the KR and PT domains, respectively. O-methylation seems to be catalyzed by an unknown methyltransferase rather than by the CMeT domain of ppsB. Two hydroxylations and one further decarboxylation step catalyzed by yet unknown enzymes are then required to yield 4'-hydroxy-3'-methoxypropiophenone. PpsC functions as a carrier protein to transport 4'-hydroxy-3'-methoxypropiophenone to a specific cell compartment in which 4'-hydroxy-3'-methoxypropiophenone is hydroxylated to 2,4'-dihydroxy-3'-methoxypropiophenone by a still to be identified enzyme. The sequence is that of Reducing polyketide synthase ppsB from Aspergillus oryzae (strain ATCC 42149 / RIB 40) (Yellow koji mold).